Consider the following 108-residue polypeptide: uncharacterized protein (108 aa).

A helical membrane pass occupies residues 7–27 (FIPMLLVANAAPYFFYPIFML).

The protein to N.crassa NCU05373.1.

It localises to the membrane. This is an uncharacterized protein from Schizosaccharomyces pombe (strain 972 / ATCC 24843) (Fission yeast).